A 216-amino-acid polypeptide reads, in one-letter code: Thymidine kinase (216 aa).

ATP-binding positions include 9 to 16 (GTMDCGKS) and 86 to 89 (DEAQ). Residue glutamate 87 is the Proton acceptor of the active site.

Belongs to the thymidine kinase family. In terms of assembly, homotetramer.

The protein localises to the cytoplasm. The enzyme catalyses thymidine + ATP = dTMP + ADP + H(+). This chain is Thymidine kinase, found in Streptomyces coelicolor (strain ATCC BAA-471 / A3(2) / M145).